A 979-amino-acid chain; its full sequence is Zinc finger protein 280D (979 aa).

Residues lysine 32, lysine 34, lysine 74, and lysine 87 each participate in a glycyl lysine isopeptide (Lys-Gly) (interchain with G-Cter in SUMO2) cross-link. Residues 89–101 (TSQHYTNPTSNPV) are compositionally biased toward polar residues. A disordered region spans residues 89 to 119 (TSQHYTNPTSNPVPASPINFHPESRSSDSSV). Serine 104 carries the phosphoserine modification. Residues lysine 126 and lysine 140 each participate in a glycyl lysine isopeptide (Lys-Gly) (interchain with G-Cter in SUMO2) cross-link. The segment at 157–236 (YQGGPTLSMA…TSSNQSKNGT (80 aa)) is disordered. The segment covering 169-187 (SESSFLSKRPSTSEVNNVN) has biased composition (polar residues). Glycyl lysine isopeptide (Lys-Gly) (interchain with G-Cter in SUMO2) cross-links involve residues lysine 189, lysine 210, lysine 223, lysine 233, lysine 275, lysine 284, and lysine 292. The span at 195-235 (ESVSGANSSAVLPSVKSPSVTSSQAMLAKGTNTSSNQSKNG) shows a compositional bias: polar residues. 2 consecutive C2H2-type zinc fingers follow at residues 321-343 (FKCF…MKHH) and 358-381 (TTCQ…ESTH). Residues 388-412 (TICKICELSFETEHVLLQHMKDNHK) form a C2H2-type 3; degenerate zinc finger. 2 consecutive C2H2-type zinc fingers follow at residues 418 to 441 (YVCQ…RTSH) and 449 to 469 (CPFC…YMKH). Disordered stretches follow at residues 523–608 (GPLQ…NKKS), 739–809 (LKKE…SDKE), and 896–979 (FLRK…KERS). The span at 527–541 (SGASPTPSISASAST) shows a compositional bias: low complexity. 2 stretches are compositionally biased toward polar residues: residues 542–584 (LQLS…NGSK) and 592–608 (SNMQ…NKKS). Serine 545 carries the post-translational modification Phosphoserine. Lysine 550 is covalently cross-linked (Glycyl lysine isopeptide (Lys-Gly) (interchain with G-Cter in SUMO2)). Positions 739 to 784 (LKKEAPAKEQEPVSKEIARPNMAERETETSNSESKQDKAASSKEKN) are enriched in basic and acidic residues. Residue lysine 740 forms a Glycyl lysine isopeptide (Lys-Gly) (interchain with G-Cter in SUMO2) linkage. A compositionally biased stretch (polar residues) spans 786-797 (CNANSFEGSSTT). Residues 798-809 (KSEESITVSDKE) are compositionally biased toward basic and acidic residues. Residues 905–914 (SVSSDVSEQG) show a composition bias toward polar residues. Phosphoserine is present on residues serine 908 and serine 911. Residues 970-979 (VDLEDEKERS) show a composition bias toward acidic residues. Lysine 976 participates in a covalent cross-link: Glycyl lysine isopeptide (Lys-Gly) (interchain with G-Cter in SUMO2).

The protein resides in the nucleus. Its function is as follows. May function as a transcription factor. In Homo sapiens (Human), this protein is Zinc finger protein 280D (ZNF280D).